The following is a 446-amino-acid chain: Signal recognition particle protein (446 aa).

GTP-binding positions include 108-115 (GLQGAGKT), 191-195 (DTAGR), and 249-252 (TKLD).

The protein belongs to the GTP-binding SRP family. SRP54 subfamily. As to quaternary structure, part of the signal recognition particle protein translocation system, which is composed of SRP and FtsY. Interacts with a small cytoplasmic RNA (sc-RNA).

It localises to the cytoplasm. It catalyses the reaction GTP + H2O = GDP + phosphate + H(+). Involved in targeting and insertion of nascent membrane proteins into the cytoplasmic membrane. Binds to the hydrophobic signal sequence of the ribosome-nascent chain (RNC) as it emerges from the ribosomes. The SRP-RNC complex is then targeted to the cytoplasmic membrane where it interacts with the SRP receptor FtsY. Interaction with FtsY leads to the transfer of the RNC complex to the Sec translocase for insertion into the membrane, the hydrolysis of GTP by both Ffh and FtsY, and the dissociation of the SRP-FtsY complex into the individual components. The protein is Signal recognition particle protein of Bacillus subtilis (strain 168).